A 599-amino-acid chain; its full sequence is Putative sensor histidine kinase NtrY-like (599 aa).

A run of 4 helical transmembrane segments spans residues valine 17 to isoleucine 37, phenylalanine 44 to valine 64, isoleucine 85 to valine 105, and isoleucine 285 to phenylalanine 305. An HAMP domain is found at alanine 307 to arginine 361. In terms of domain architecture, Histidine kinase spans lysine 378–glutamate 589. Residue histidine 381 is modified to Phosphohistidine; by autocatalysis.

Its subcellular location is the cell membrane. It catalyses the reaction ATP + protein L-histidine = ADP + protein N-phospho-L-histidine.. Its function is as follows. Member of the two-component regulatory system RC0948/RC0849. This Rickettsia conorii (strain ATCC VR-613 / Malish 7) protein is Putative sensor histidine kinase NtrY-like.